A 198-amino-acid polypeptide reads, in one-letter code: Probable GTP-binding protein EngB (198 aa).

An EngB-type G domain is found at Asp-22–Thr-195. GTP is bound by residues Gly-30–Ser-37, Gly-57–Thr-61, Asp-75–Gly-78, Thr-142–Asp-145, and Phe-174–Ser-176. Positions 37 and 59 each coordinate Mg(2+).

It belongs to the TRAFAC class TrmE-Era-EngA-EngB-Septin-like GTPase superfamily. EngB GTPase family. Requires Mg(2+) as cofactor.

Necessary for normal cell division and for the maintenance of normal septation. This is Probable GTP-binding protein EngB from Bacillus cereus (strain B4264).